Here is a 338-residue protein sequence, read N- to C-terminus: Glycerol-3-phosphate dehydrogenase [NAD(P)+] (338 aa).

The NADPH site is built by Trp-11, Arg-30, and Lys-109. Sn-glycerol 3-phosphate contacts are provided by Lys-109, Gly-143, and Ser-145. Ala-147 contributes to the NADPH binding site. Positions 198, 251, 261, 262, and 263 each coordinate sn-glycerol 3-phosphate. Lys-198 (proton acceptor) is an active-site residue. Residue Arg-262 participates in NADPH binding. NADPH-binding residues include Val-286 and Glu-288.

This sequence belongs to the NAD-dependent glycerol-3-phosphate dehydrogenase family.

Its subcellular location is the cytoplasm. It carries out the reaction sn-glycerol 3-phosphate + NAD(+) = dihydroxyacetone phosphate + NADH + H(+). The catalysed reaction is sn-glycerol 3-phosphate + NADP(+) = dihydroxyacetone phosphate + NADPH + H(+). It functions in the pathway membrane lipid metabolism; glycerophospholipid metabolism. Its function is as follows. Catalyzes the reduction of the glycolytic intermediate dihydroxyacetone phosphate (DHAP) to sn-glycerol 3-phosphate (G3P), the key precursor for phospholipid synthesis. In Cupriavidus necator (strain ATCC 17699 / DSM 428 / KCTC 22496 / NCIMB 10442 / H16 / Stanier 337) (Ralstonia eutropha), this protein is Glycerol-3-phosphate dehydrogenase [NAD(P)+].